Here is a 136-residue protein sequence, read N- to C-terminus: uncharacterized protein (136 aa).

2 disordered regions span residues 58–82 and 112–136; these read TSDD…TTQT and NNPK…VVTQ.

This is an uncharacterized protein from Dictyostelium discoideum (Social amoeba).